A 784-amino-acid chain; its full sequence is Cation/H(+) antiporter 26 (784 aa).

A run of 11 helical transmembrane segments spans residues P38–L58, L61–L81, Y97–A117, L130–C150, L201–I221, F240–I260, T286–V306, I321–V341, I351–L371, F376–Y396, and E413–V433.

The protein belongs to the monovalent cation:proton antiporter 2 (CPA2) transporter (TC 2.A.37) family. CHX (TC 2.A.37.4) subfamily. In terms of tissue distribution, expressed in pollen.

It localises to the membrane. May operate as a cation/H(+) antiporter. The chain is Cation/H(+) antiporter 26 (CHX26) from Arabidopsis thaliana (Mouse-ear cress).